Consider the following 373-residue polypeptide: 4-hydroxy-3-methylbut-2-en-1-yl diphosphate synthase (flavodoxin) (373 aa).

Residues C270, C273, C305, and E312 each contribute to the [4Fe-4S] cluster site.

The protein belongs to the IspG family. [4Fe-4S] cluster is required as a cofactor.

It catalyses the reaction (2E)-4-hydroxy-3-methylbut-2-enyl diphosphate + oxidized [flavodoxin] + H2O + 2 H(+) = 2-C-methyl-D-erythritol 2,4-cyclic diphosphate + reduced [flavodoxin]. The protein operates within isoprenoid biosynthesis; isopentenyl diphosphate biosynthesis via DXP pathway; isopentenyl diphosphate from 1-deoxy-D-xylulose 5-phosphate: step 5/6. Converts 2C-methyl-D-erythritol 2,4-cyclodiphosphate (ME-2,4cPP) into 1-hydroxy-2-methyl-2-(E)-butenyl 4-diphosphate. The polypeptide is 4-hydroxy-3-methylbut-2-en-1-yl diphosphate synthase (flavodoxin) (Photorhabdus laumondii subsp. laumondii (strain DSM 15139 / CIP 105565 / TT01) (Photorhabdus luminescens subsp. laumondii)).